A 293-amino-acid chain; its full sequence is MSAPVFGRLLTAMVTPMTFDGAVDLRRTGELAHKLVEEQNNDGIVVNGTTGESPTTTDSEKAEIVKAVVEAVGSDAAVVAGVGTNDTAHTIELAHQAAEAGADGLLVVTPYYSKPSQAGIIEHFTAVADATDLPIMLYDIPGRTGTPIETKTLIELADHARIVAVKDAKGLVVESATVMASTTLAYYSGDDAITPALLSVGGVGLVGTSTHFTGRRMHEVIDAYVDGRIDEALSTYREILPVLTGVFAAQGATMVKAGLAHQGFTVGRVRPPQTMPTPEQAETFFGVLDRTQL.

Thr50 provides a ligand contact to pyruvate. Tyr138 functions as the Proton donor/acceptor in the catalytic mechanism. Lys166 (schiff-base intermediate with substrate) is an active-site residue. Position 206 (Val206) interacts with pyruvate.

The protein belongs to the DapA family. Homotetramer; dimer of dimers.

It is found in the cytoplasm. It catalyses the reaction L-aspartate 4-semialdehyde + pyruvate = (2S,4S)-4-hydroxy-2,3,4,5-tetrahydrodipicolinate + H2O + H(+). It functions in the pathway amino-acid biosynthesis; L-lysine biosynthesis via DAP pathway; (S)-tetrahydrodipicolinate from L-aspartate: step 3/4. Its function is as follows. Catalyzes the condensation of (S)-aspartate-beta-semialdehyde [(S)-ASA] and pyruvate to 4-hydroxy-tetrahydrodipicolinate (HTPA). The polypeptide is 4-hydroxy-tetrahydrodipicolinate synthase (Cutibacterium acnes (strain DSM 16379 / KPA171202) (Propionibacterium acnes)).